The chain runs to 382 residues: Anhydro-N-acetylmuramic acid kinase (382 aa).

9 to 16 (GTSLDGID) contacts ATP.

It belongs to the anhydro-N-acetylmuramic acid kinase family.

It catalyses the reaction 1,6-anhydro-N-acetyl-beta-muramate + ATP + H2O = N-acetyl-D-muramate 6-phosphate + ADP + H(+). Its pathway is amino-sugar metabolism; 1,6-anhydro-N-acetylmuramate degradation. It participates in cell wall biogenesis; peptidoglycan recycling. Its function is as follows. Catalyzes the specific phosphorylation of 1,6-anhydro-N-acetylmuramic acid (anhMurNAc) with the simultaneous cleavage of the 1,6-anhydro ring, generating MurNAc-6-P. Is required for the utilization of anhMurNAc either imported from the medium or derived from its own cell wall murein, and thus plays a role in cell wall recycling. This is Anhydro-N-acetylmuramic acid kinase from Bacillus cereus (strain AH187).